We begin with the raw amino-acid sequence, 960 residues long: Serine/threonine-protein kinase atg1 (960 aa).

In terms of domain architecture, Protein kinase spans 22–327; the sequence is YTRLDEIGRG…FPEFFSNNVI (306 aa). ATP-binding positions include 28–36 and K51; that span reads IGRGSFATV. The active-site Proton acceptor is D165. 6 disordered regions span residues 333 to 467, 503 to 538, 550 to 571, 673 to 694, 789 to 815, and 926 to 960; these read GLLA…RAQE, PRLQ…PHAN, ARAD…QSPT, SAST…SADS, RLPP…TADV, and AKRS…TPPR. Composition is skewed to polar residues over residues 376–388 and 520–536; these read PVTT…TPPT and RRTT…SSPH. Positions 550–566 are enriched in basic and acidic residues; it reads ARADSTHQRQHSYERRY. Residues 789–800 are compositionally biased toward basic and acidic residues; it reads RLPPDHPSHPDN. Low complexity predominate over residues 801–815; the sequence is HSISSTAGSSSTADV. Residues 930–951 show a composition bias toward polar residues; that stretch reads SAPTPTAGSAGKTPTSNISPVT.

It belongs to the protein kinase superfamily. Ser/Thr protein kinase family. APG1/unc-51/ULK1 subfamily. As to quaternary structure, homodimer. Forms a ternary complex with ATG13 and ATG17.

The protein resides in the cytoplasm. The protein localises to the preautophagosomal structure membrane. The enzyme catalyses L-seryl-[protein] + ATP = O-phospho-L-seryl-[protein] + ADP + H(+). The catalysed reaction is L-threonyl-[protein] + ATP = O-phospho-L-threonyl-[protein] + ADP + H(+). Its function is as follows. Serine/threonine protein kinase involved in the cytoplasm to vacuole transport (Cvt) and found to be essential in autophagy, where it is required for the formation of autophagosomes. Involved in the clearance of protein aggregates which cannot be efficiently cleared by the proteasome. Required for selective autophagic degradation of the nucleus (nucleophagy) as well as for mitophagy which contributes to regulate mitochondrial quantity and quality by eliminating the mitochondria to a basal level to fulfill cellular energy requirements and preventing excess ROS production. Also involved in endoplasmic reticulum-specific autophagic process, in selective removal of ER-associated degradation (ERAD) substrates. Plays a key role in ATG9 and ATG23 cycling through the pre-autophagosomal structure and is necessary to promote ATG18 binding to ATG9 through phosphorylation of ATG9. Catalyzes phosphorylation of ATG4, decreasing the interaction between ATG4 and ATG8 and impairing deconjugation of PE-conjugated forms of ATG8. This Penicillium rubens (strain ATCC 28089 / DSM 1075 / NRRL 1951 / Wisconsin 54-1255) (Penicillium chrysogenum) protein is Serine/threonine-protein kinase atg1.